Here is a 441-residue protein sequence, read N- to C-terminus: Chromosome partition protein MukF (441 aa).

A leucine-zipper region spans residues 208-236; it reads LTETSSTLRELQDTLEAAGDKLQTSLLSI.

Belongs to the MukF family. Interacts, and probably forms a ternary complex, with MukE and MukB via its C-terminal region. The complex formation is stimulated by calcium or magnesium. It is required for an interaction between MukE and MukB.

It is found in the cytoplasm. The protein resides in the nucleoid. Functionally, involved in chromosome condensation, segregation and cell cycle progression. May participate in facilitating chromosome segregation by condensation DNA from both sides of a centrally located replisome during cell division. Not required for mini-F plasmid partitioning. Probably acts via its interaction with MukB and MukE. Overexpression results in anucleate cells. It has a calcium binding activity. This is Chromosome partition protein MukF from Pectobacterium atrosepticum (strain SCRI 1043 / ATCC BAA-672) (Erwinia carotovora subsp. atroseptica).